The chain runs to 48 residues: uncharacterized protein (48 aa).

This is an uncharacterized protein from Dictyostelium discoideum (Social amoeba).